Consider the following 120-residue polypeptide: Large ribosomal subunit protein bL17 (120 aa).

The protein belongs to the bacterial ribosomal protein bL17 family. Part of the 50S ribosomal subunit. Contacts protein L32.

This is Large ribosomal subunit protein bL17 from Bacillus velezensis (strain DSM 23117 / BGSC 10A6 / LMG 26770 / FZB42) (Bacillus amyloliquefaciens subsp. plantarum).